Consider the following 418-residue polypeptide: Xanthosine permease (418 aa).

Over 1-9 (MSIAMRLKV) the chain is Cytoplasmic. A helical transmembrane segment spans residues 10-30 (MSFLQYFIWGSWLVTLGSYMI). Over 31 to 41 (NTLHFTGANVG) the chain is Periplasmic. A helical membrane pass occupies residues 42–62 (MVYSSKGIAAIIMPGIMGIIA). Over 63 to 70 (DKWLRAER) the chain is Cytoplasmic. 2 helical membrane-spanning segments follow: residues 71–91 (AYMLCHLVCAGVLFYAASVTD) and 92–112 (PDMMFWVMLVNAMAFMPTIAL). The Cytoplasmic portion of the chain corresponds to 113–136 (SNSVSYSCLAQAGLDPVTAFPPIR). A helical membrane pass occupies residues 137 to 157 (VFGTVGFIVAMWAVSLLHLEL). The Periplasmic portion of the chain corresponds to 158–159 (SS). Residues 160-180 (LQLYIASGASLLLSAYALTLP) form a helical membrane-spanning segment. Topologically, residues 181–209 (KIPVAEKKATTSLASKLGLDAFVLFKNPR) are cytoplasmic. A helical transmembrane segment spans residues 210–230 (MAIFFLFAMMLGAVLQITNVF). Topologically, residues 231 to 254 (GNPFLHDFARNPEFADSFVVKYPS) are periplasmic. The chain crosses the membrane as a helical span at residues 255–275 (ILLSVSQMAEVGFILTIPFFL). Residues 276–277 (KR) are Cytoplasmic-facing. A helical transmembrane segment spans residues 278 to 298 (FGIKTVMLMSMVAWTLRFGFF). At 299-306 (AYGDPSTT) the chain is on the periplasmic side. The helical transmembrane segment at 307–327 (GFILLLLSMIVYGCAFDFFNI) threads the bilayer. At 328-348 (SGSVFVEQEVDSSIRASAQGL) the chain is on the cytoplasmic side. Residues 349–369 (FMTMVNGVGAWVGSILSGMAV) traverse the membrane as a helical segment. The Periplasmic segment spans residues 370–381 (DYFSVDGVKDWQ). The helical transmembrane segment at 382–402 (TIWLVFAGYALFLAVIFFFGF) threads the bilayer. The Cytoplasmic portion of the chain corresponds to 403–418 (KYNHDPEKIKHRAVTH).

Belongs to the major facilitator superfamily. Nucleoside:H(+) symporter (NHS) (TC 2.A.1.10) family.

Its subcellular location is the cell inner membrane. The catalysed reaction is xanthosine(in) + H(+)(in) = xanthosine(out) + H(+)(out). Transport is abolished by the proton uncoupler 2,4-dinitrophenol. Functionally, uptake of xanthosine. Can also transport other nucleosides such as inosine, adenosine, cytidine, uridine and thymidine. Transport is driven by a proton motive force. The protein is Xanthosine permease of Escherichia coli (strain K12).